The sequence spans 390 residues: NADH-quinone oxidoreductase subunit H (390 aa).

A run of 9 helical transmembrane segments spans residues 4-24 (WLLT…ALLT), 78-98 (LVYT…FGGI), 120-140 (VLAL…GGWA), 157-177 (MISY…LVGS), 191-211 (GWMI…SFAE), 247-266 (YVNM…GGWR), 278-298 (IADI…FVFI), 315-337 (FGWK…YIAF), and 341-360 (WGWW…LLAL).

This sequence belongs to the complex I subunit 1 family. As to quaternary structure, NDH-1 is composed of 15 different subunits. Subunits NuoA, H, J, K, L, M, N constitute the membrane sector of the complex.

Its subcellular location is the cell membrane. It catalyses the reaction a quinone + NADH + 5 H(+)(in) = a quinol + NAD(+) + 4 H(+)(out). NDH-1 shuttles electrons from NADH, via FMN and iron-sulfur (Fe-S) centers, to quinones in the respiratory chain. The immediate electron acceptor for the enzyme in this species is believed to be ubiquinone. Couples the redox reaction to proton translocation (for every two electrons transferred, four hydrogen ions are translocated across the cytoplasmic membrane), and thus conserves the redox energy in a proton gradient. This subunit may bind ubiquinone. This Deinococcus deserti (strain DSM 17065 / CIP 109153 / LMG 22923 / VCD115) protein is NADH-quinone oxidoreductase subunit H.